The following is a 367-amino-acid chain: UDP-N-acetylglucosamine--N-acetylmuramyl-(pentapeptide) pyrophosphoryl-undecaprenol N-acetylglucosamine transferase (367 aa).

Residues 21–23 (TGG), Asn129, Arg170, Ser198, and Gln295 each bind UDP-N-acetyl-alpha-D-glucosamine.

The protein belongs to the glycosyltransferase 28 family. MurG subfamily.

The protein localises to the cell inner membrane. It catalyses the reaction di-trans,octa-cis-undecaprenyl diphospho-N-acetyl-alpha-D-muramoyl-L-alanyl-D-glutamyl-meso-2,6-diaminopimeloyl-D-alanyl-D-alanine + UDP-N-acetyl-alpha-D-glucosamine = di-trans,octa-cis-undecaprenyl diphospho-[N-acetyl-alpha-D-glucosaminyl-(1-&gt;4)]-N-acetyl-alpha-D-muramoyl-L-alanyl-D-glutamyl-meso-2,6-diaminopimeloyl-D-alanyl-D-alanine + UDP + H(+). The protein operates within cell wall biogenesis; peptidoglycan biosynthesis. Functionally, cell wall formation. Catalyzes the transfer of a GlcNAc subunit on undecaprenyl-pyrophosphoryl-MurNAc-pentapeptide (lipid intermediate I) to form undecaprenyl-pyrophosphoryl-MurNAc-(pentapeptide)GlcNAc (lipid intermediate II). This is UDP-N-acetylglucosamine--N-acetylmuramyl-(pentapeptide) pyrophosphoryl-undecaprenol N-acetylglucosamine transferase from Synechococcus sp. (strain JA-2-3B'a(2-13)) (Cyanobacteria bacterium Yellowstone B-Prime).